We begin with the raw amino-acid sequence, 432 residues long: Tol-Pal system protein TolB (432 aa).

Residues 1 to 21 (MKHVRIFATLLALLVISVTPA) form the signal peptide.

Belongs to the TolB family. In terms of assembly, the Tol-Pal system is composed of five core proteins: the inner membrane proteins TolA, TolQ and TolR, the periplasmic protein TolB and the outer membrane protein Pal. They form a network linking the inner and outer membranes and the peptidoglycan layer.

It is found in the periplasm. Part of the Tol-Pal system, which plays a role in outer membrane invagination during cell division and is important for maintaining outer membrane integrity. The chain is Tol-Pal system protein TolB from Geobacter sulfurreducens (strain ATCC 51573 / DSM 12127 / PCA).